A 689-amino-acid chain; its full sequence is MSGRAKVAGEEALVGVAAPQPVPAGILDECTNVTVSQPPSPPRPEESDCAGCLETPGEAAALPCGHSLCRGCAQRAADAAGPCCPRCRARGAGWARRRARDDWQADAEVLGERARRGPPERCRPRRDGGAAAAGPRPEQESRAAPAEPEFIFRAPIKLSKPGEFREEYESLRKLREEKLQEEKTSEDQIHKLLPEDTEIGKRKMDEQKKRDEPVVLKTNLEHCPARLSDSENEEPSRGKMIQTHRSAFVSKSSSYSLAFLAGNLNSKMERSQSCSDTGQDRAKSRLRAAPTSKAKATAMTPTSNPIIGVLLSTRNHRCLSAPDLTVEKRLPFSSLSALASLHKPERSISPESNDSISEELNHFKPIVCSPCTPPKRLPDGRVLSPLIIKSTPRNLNRSLQKQTSYEASPRILKKWEQIFQERQIKKTLSKATLTSLAPETGDDLLVSEVTQSNKEKPLLALNTRLSSGQVLSECTGPTAPDLDYFSSVSQTKAEQGSDRKKNTEIPLETCCSSELPVGASGTSLEREQSERSGSSPDAKLDKTRITASMKISAVNSVLPKNSVLGGVLKTKKQLKTVNHFDLPNGVLADNLGDEPLPSLRRGRKRRCKTKHLEQNGSLKKLRQSSGEVGLAPTDPVLREMEQKLQQEEEDRQLALQLQRMFDNERRTVSRRKGSVDQYLLRSSSMAGAK.

The RING-type zinc-finger motif lies at 49–88; it reads CAGCLETPGEAAALPCGHSLCRGCAQRAADAAGPCCPRCR. Disordered stretches follow at residues 95–148 and 178–238; these read ARRR…PAEP and KLQE…PSRG. 2 stretches are compositionally biased toward basic and acidic residues: residues 110–128 and 178–224; these read LGER…RRDG and KLQE…EHCP. Positions 186–194 match the UMI motif motif; sequence EDQIHKLLP. Phosphoserine is present on residues S228 and S230. K267 participates in a covalent cross-link: Glycyl lysine isopeptide (Lys-Gly) (interchain with G-Cter in SUMO2). Residues 268 to 277 are compositionally biased toward polar residues; sequence MERSQSCSDT. The segment at 268-299 is disordered; it reads MERSQSCSDTGQDRAKSRLRAAPTSKAKATAM. Phosphoserine is present on S320. K343 participates in a covalent cross-link: Glycyl lysine isopeptide (Lys-Gly) (interchain with G-Cter in SUMO2). Phosphoserine is present on residues S384 and S390. A Phosphothreonine modification is found at T391. A Phosphoserine modification is found at S466. The tract at residues 489-542 is disordered; it reads SQTKAEQGSDRKKNTEIPLETCCSSELPVGASGTSLEREQSERSGSSPDAKLDK. A Glycyl lysine isopeptide (Lys-Gly) (interchain with G-Cter in SUMO2) cross-link involves residue K492. S625 is modified (phosphoserine). The short motif at 646-663 is the MIU motif element; it reads QEEEDRQLALQLQRMFDN. Residues 670–682 carry the LR motif motif; it reads RRKGSVDQYLLRS. Phosphoserine is present on S674.

It belongs to the RNF169 family. Interacts with DYRK1B. Phosphorylated by DYRK1A; phosphorylation increases RNF169 ability to block accumulation of TP53BP1 at the DSB sites.

It localises to the chromosome. It is found in the nucleus. The protein localises to the nucleoplasm. The catalysed reaction is S-ubiquitinyl-[E2 ubiquitin-conjugating enzyme]-L-cysteine + [acceptor protein]-L-lysine = [E2 ubiquitin-conjugating enzyme]-L-cysteine + N(6)-ubiquitinyl-[acceptor protein]-L-lysine.. It participates in protein modification; protein ubiquitination. Functionally, probable E3 ubiquitin-protein ligase that acts as a regulator of double-strand breaks (DSBs) repair following DNA damage. Functions in a non-canonical fashion to harness RNF168-mediated protein recruitment to DSB-containing chromatin, thereby contributing to regulation of DSB repair pathway utilization. Once recruited to DSB repair sites by recognizing and binding ubiquitin catalyzed by RNF168, competes with TP53BP1 and BRCA1 for association with RNF168-modified chromatin, thereby favouring homologous recombination repair (HRR) and single-strand annealing (SSA) instead of non-homologous end joining (NHEJ) mediated by TP53BP1. E3 ubiquitin-protein ligase activity is not required for regulation of DSBs repair. The polypeptide is E3 ubiquitin-protein ligase RNF169 (RNF169) (Bos taurus (Bovine)).